The primary structure comprises 1366 residues: DNA-directed RNA polymerase subunit beta' (1366 aa).

Basic residues predominate over residues 1–20 (MTSSKPKKTSRVRKTTKNSK). The segment at 1–37 (MTSSKPKKTSRVRKTTKNSKKNNPVTMPVLPKTPPSF) is disordered. 4 residues coordinate Zn(2+): Cys-248, Cys-315, Cys-322, and Cys-325. The segment at 1292-1366 (TVDMPQSPAV…LQEEGLLSDE (75 aa)) is disordered. A compositionally biased stretch (low complexity) spans 1354–1366 (LEGLQEEGLLSDE).

The protein belongs to the RNA polymerase beta' chain family. RpoC2 subfamily. In terms of assembly, in cyanobacteria the RNAP catalytic core is composed of 2 alpha, 1 beta, 1 beta', 1 gamma and 1 omega subunit. When a sigma factor is associated with the core the holoenzyme is formed, which can initiate transcription. Zn(2+) is required as a cofactor.

The enzyme catalyses RNA(n) + a ribonucleoside 5'-triphosphate = RNA(n+1) + diphosphate. DNA-dependent RNA polymerase catalyzes the transcription of DNA into RNA using the four ribonucleoside triphosphates as substrates. The chain is DNA-directed RNA polymerase subunit beta' from Prochlorococcus marinus (strain MIT 9215).